Reading from the N-terminus, the 228-residue chain is Putative N-acetylmannosamine-6-phosphate 2-epimerase (228 aa).

It belongs to the NanE family.

The catalysed reaction is an N-acyl-D-glucosamine 6-phosphate = an N-acyl-D-mannosamine 6-phosphate. It functions in the pathway amino-sugar metabolism; N-acetylneuraminate degradation; D-fructose 6-phosphate from N-acetylneuraminate: step 3/5. In terms of biological role, converts N-acetylmannosamine-6-phosphate (ManNAc-6-P) to N-acetylglucosamine-6-phosphate (GlcNAc-6-P). The protein is Putative N-acetylmannosamine-6-phosphate 2-epimerase of Lactiplantibacillus plantarum (strain ATCC BAA-793 / NCIMB 8826 / WCFS1) (Lactobacillus plantarum).